We begin with the raw amino-acid sequence, 243 residues long: 7-cyano-7-deazaguanine synthase (243 aa).

Residue 18–28 (FSGGQDSATCL) participates in ATP binding. Zn(2+) is bound by residues Cys206, Cys221, Cys224, and Cys227.

Belongs to the QueC family. Zn(2+) is required as a cofactor.

The enzyme catalyses 7-carboxy-7-deazaguanine + NH4(+) + ATP = 7-cyano-7-deazaguanine + ADP + phosphate + H2O + H(+). It functions in the pathway purine metabolism; 7-cyano-7-deazaguanine biosynthesis. Its function is as follows. Catalyzes the ATP-dependent conversion of 7-carboxy-7-deazaguanine (CDG) to 7-cyano-7-deazaguanine (preQ(0)). The protein is 7-cyano-7-deazaguanine synthase of Methylorubrum extorquens (strain PA1) (Methylobacterium extorquens).